Here is a 200-residue protein sequence, read N- to C-terminus: ATP synthase subunit s, mitochondrial (200 aa).

A mitochondrion-targeting transit peptide spans 1-25; that stretch reads MMLFGKISQQLCGVKKLPWSCDSRY. The interval 1–61 is N-terminal domain; the sequence is MMLFGKISQQ…SEWLLRCGAM (61 aa). Residue Gly-59 participates in Mg(2+) binding. LRR repeat units lie at residues 62 to 87, 88 to 116, 117 to 141, and 142 to 173; these read VRYHGQERWQKDYNHLPTGPLDKYKI, QAIDATDSCIMSIGFDHMEGLEHVEKIRL, CKCHYIEDDCLLRLSQLENLQKTIL, and EMEIISCGNITDKGIIALLHLRNLKYLLLSDL. Thr-93 provides a ligand contact to Mg(2+).

The protein belongs to the ATP synthase subunit s family. Homotetramer. Associates with ATP synthase.

It is found in the mitochondrion. The protein resides in the mitochondrion inner membrane. Functionally, involved in regulation of mitochondrial membrane ATP synthase. Necessary for H(+) conduction of ATP synthase. Facilitates energy-driven catalysis of ATP synthesis by blocking a proton leak through an alternative proton exit pathway. The protein is ATP synthase subunit s, mitochondrial (DMAC2L) of Pongo abelii (Sumatran orangutan).